A 177-amino-acid polypeptide reads, in one-letter code: Large ribosomal subunit protein uL6 (177 aa).

This sequence belongs to the universal ribosomal protein uL6 family. As to quaternary structure, part of the 50S ribosomal subunit.

This protein binds to the 23S rRNA, and is important in its secondary structure. It is located near the subunit interface in the base of the L7/L12 stalk, and near the tRNA binding site of the peptidyltransferase center. The polypeptide is Large ribosomal subunit protein uL6 (Alteromonas mediterranea (strain DSM 17117 / CIP 110805 / LMG 28347 / Deep ecotype)).